Reading from the N-terminus, the 281-residue chain is DegV domain-containing protein spr0652 (281 aa).

One can recognise a DegV domain in the interval 3–280 (WKIIADSGCD…EGGLLMGYEI (278 aa)). 2 residues coordinate hexadecanoate: S63 and S91.

May bind long-chain fatty acids, such as palmitate, and may play a role in lipid transport or fatty acid metabolism. This is DegV domain-containing protein spr0652 from Streptococcus pneumoniae (strain ATCC BAA-255 / R6).